We begin with the raw amino-acid sequence, 425 residues long: Tyrosine--tRNA ligase (425 aa).

Tyr37 provides a ligand contact to L-tyrosine. The short motif at 42–51 (PTADSLHLGH) is the 'HIGH' region element. Residues Tyr175 and Gln179 each coordinate L-tyrosine. A 'KMSKS' region motif is present at residues 235-239 (KFGKT). Lys238 contributes to the ATP binding site. The 58-residue stretch at 357–414 (ADLQQALVSAELVPSRGQARTMISSNAVTINGEKQADPEYTFSASDRLFDRYTLLRRG) folds into the S4 RNA-binding domain.

The protein belongs to the class-I aminoacyl-tRNA synthetase family. TyrS type 1 subfamily. Homodimer.

The protein resides in the cytoplasm. It catalyses the reaction tRNA(Tyr) + L-tyrosine + ATP = L-tyrosyl-tRNA(Tyr) + AMP + diphosphate + H(+). Catalyzes the attachment of tyrosine to tRNA(Tyr) in a two-step reaction: tyrosine is first activated by ATP to form Tyr-AMP and then transferred to the acceptor end of tRNA(Tyr). This is Tyrosine--tRNA ligase from Pectobacterium carotovorum subsp. carotovorum (strain PC1).